The primary structure comprises 162 residues: Putative pre-16S rRNA nuclease (162 aa).

This sequence belongs to the YqgF nuclease family.

Its subcellular location is the cytoplasm. Could be a nuclease involved in processing of the 5'-end of pre-16S rRNA. The chain is Putative pre-16S rRNA nuclease from Brucella melitensis biotype 2 (strain ATCC 23457).